The primary structure comprises 72 residues: MNNSMISPSVVDLLEKIHDRYSLVILTSKRARQIIEGAEPQISIKSNKPLTIAINEVDQDAVEFEILEEGLK.

The protein belongs to the RNA polymerase subunit omega family. The RNAP catalytic core consists of 2 alpha, 1 beta, 1 beta' and 1 omega subunit. When a sigma factor is associated with the core the holoenzyme is formed, which can initiate transcription.

The catalysed reaction is RNA(n) + a ribonucleoside 5'-triphosphate = RNA(n+1) + diphosphate. Promotes RNA polymerase assembly. Latches the N- and C-terminal regions of the beta' subunit thereby facilitating its interaction with the beta and alpha subunits. This Clostridium beijerinckii (strain ATCC 51743 / NCIMB 8052) (Clostridium acetobutylicum) protein is DNA-directed RNA polymerase subunit omega.